Here is a 358-residue protein sequence, read N- to C-terminus: Adenosine deaminase (358 aa).

His-14 and His-16 together coordinate Zn(2+). 3 residues coordinate substrate: His-16, Asp-18, and Gly-183. Residue His-212 coordinates Zn(2+). Glu-215 (proton donor) is an active-site residue. Asp-294 contributes to the Zn(2+) binding site. Asp-295 provides a ligand contact to substrate.

Belongs to the metallo-dependent hydrolases superfamily. Adenosine and AMP deaminases family. Zn(2+) is required as a cofactor.

The protein resides in the cell membrane. It is found in the cell junction. It localises to the cytoplasmic vesicle lumen. The protein localises to the cytoplasm. Its subcellular location is the lysosome. It carries out the reaction adenosine + H2O + H(+) = inosine + NH4(+). The enzyme catalyses 2'-deoxyadenosine + H2O + H(+) = 2'-deoxyinosine + NH4(+). In terms of biological role, catalyzes the hydrolytic deamination of adenosine and 2-deoxyadenosine. Plays an important role in purine metabolism and in adenosine homeostasis. Modulates signaling by extracellular adenosine, and so contributes indirectly to cellular signaling events. May act as a positive regulator of T-cell coactivation. In Xenopus laevis (African clawed frog), this protein is Adenosine deaminase (ada).